The primary structure comprises 447 residues: 26S proteasome non-ATPase regulatory subunit 12 (447 aa).

The interval 1-23 (MTIGLEPAVSSKTKDKMEQDLSP) is disordered. The 172-residue stretch at 240-411 (NYIEIARCYL…GIATFTTTND (172 aa)) folds into the PCI domain.

The protein belongs to the proteasome subunit p55 family.

Acts as a regulatory subunit of the 26S proteasome which is involved in the ATP-dependent degradation of ubiquitinated proteins. This Dictyostelium discoideum (Social amoeba) protein is 26S proteasome non-ATPase regulatory subunit 12 (psmD12).